The sequence spans 98 residues: Large ribosomal subunit protein eL21 (98 aa).

Belongs to the eukaryotic ribosomal protein eL21 family.

This Methanocorpusculum labreanum (strain ATCC 43576 / DSM 4855 / Z) protein is Large ribosomal subunit protein eL21.